A 180-amino-acid chain; its full sequence is Protein SPMIP9 (180 aa).

As to quaternary structure, microtubule inner protein component of sperm flagellar doublet microtubules. As to expression, only detected after the mouse is 35 days old. Expression increases gradually from day 35 to 6 months, and remains stable after 54 days. Exclusively expressed in the epididymis and testis.

It localises to the nucleus. The protein resides in the cytoplasm. Its subcellular location is the cytoskeleton. It is found in the flagellum axoneme. Microtubule inner protein (MIP) part of the dynein-decorated doublet microtubules (DMTs) in flagella axoneme. The protein is Protein SPMIP9 (Spmip9) of Mus musculus (Mouse).